The sequence spans 511 residues: MVKQIMIQGTASDAGKSVLVAGLCRLFKNKGKRVVPFKSQNMSLNSFITATGDEMGRAQVFQAEAAGVFPDVRMNPVLLKPTNDRQSQVIFMGAILDNMDAVTYHDFKQTLIPKIQAVYQSLADENDIIVLEGAGSPAEINLNDRDIVNMGMAKMVDAPVVLVADIDKGGVFASIYGTIMLLNEEERARIKGVIINKFRGDVALLQPGIDMIEELTNVPVIGVIPYANLQLEEEDSVSLSGKNYVPDSNALLDIAIICLPRISNFTDFHILEIQPDISVRYIRNIADFGNPDLVIIPGSKNTLEDMAFLEESGLKNAIQNYAKNAGKVIGICGGYQMLGKKMLDPNQVESKQLEIAGLGLLDTETIFLDQKRTTQITGVTHSGEAVEGYEIHMGETKRGESTSPFCEIKAVNGNEETHQDGAISVNKNIIGTYIHGIFDNDVFLGNLFDELLTGKNKSVYPHEIINLKEHKEQEYDKLAALLEANIQMDQLEKIMKGEKICVSTQKPAIKE.

A GATase cobBQ-type domain is found at 251-443 (LLDIAIICLP…IHGIFDNDVF (193 aa)). Cys332 (nucleophile) is an active-site residue. Residue His435 is part of the active site.

The protein belongs to the CobB/CobQ family. CobQ subfamily.

It functions in the pathway cofactor biosynthesis; adenosylcobalamin biosynthesis. Catalyzes amidations at positions B, D, E, and G on adenosylcobyrinic A,C-diamide. NH(2) groups are provided by glutamine, and one molecule of ATP is hydrogenolyzed for each amidation. The chain is Cobyric acid synthase from Listeria monocytogenes serotype 4b (strain CLIP80459).